The chain runs to 250 residues: MADS-box protein J2 (250 aa).

The region spanning 1 to 61 (MGRGRVELKR…GKLYEFSSAS (61 aa)) is the MADS-box domain. Positions 87–177 (TQMNYNEYVR…KNKLEESAAR (91 aa)) constitute a K-box domain.

The protein localises to the nucleus. MADS-box transcription factor that acts redundantly with EJ2 to control meristem maturation and inflorescence architecture. This Solanum lycopersicum (Tomato) protein is MADS-box protein J2.